Consider the following 20-residue polypeptide: Thylakoid lumenal 18.4 kDa protein (20 aa).

Its subcellular location is the plastid. It localises to the chloroplast thylakoid lumen. In Spinacia oleracea (Spinach), this protein is Thylakoid lumenal 18.4 kDa protein.